The sequence spans 236 residues: E3 ubiquitin-protein ligase ATL41 (236 aa).

Residues 31 to 51 (IMLAAVASLSGVILIVFALHL) form a helical membrane-spanning segment. An RING-type; atypical zinc finger spans residues 108–150 (CAVCLSVLKEQDKARELPNCKHIFHVDCVDTWLTTCSTCPVCR).

It belongs to the RING-type zinc finger family. ATL subfamily.

It localises to the membrane. It catalyses the reaction S-ubiquitinyl-[E2 ubiquitin-conjugating enzyme]-L-cysteine + [acceptor protein]-L-lysine = [E2 ubiquitin-conjugating enzyme]-L-cysteine + N(6)-ubiquitinyl-[acceptor protein]-L-lysine.. It functions in the pathway protein modification; protein ubiquitination. Functionally, E3 ubiquitin-protein ligase able to catalyze polyubiquitination with ubiquitin-conjugating enzyme E2 UBC8, UBC10, UBC11, UBC28, UBC29, UBC30, UBC35 and UBC36 in vitro. This Arabidopsis thaliana (Mouse-ear cress) protein is E3 ubiquitin-protein ligase ATL41 (ATL41).